A 360-amino-acid polypeptide reads, in one-letter code: Alpha-N-acetyl-neuraminyl-2,3-beta-galactosyl-1,3-N-acetyl-galactosaminide alpha-2,6-sialyltransferase (360 aa).

Topologically, residues Met-1–Cys-71 are cytoplasmic. The helical; Signal-anchor for type II membrane protein transmembrane segment at Ile-72 to Thr-94 threads the bilayer. The Lumenal segment spans residues Cys-95–Lys-360. A disulfide bridge connects residues Cys-134 and Cys-283. The N-linked (GlcNAc...) asparagine glycan is linked to Asn-193.

This sequence belongs to the glycosyltransferase 29 family. High expression in brain and colon and to a lesser extent in lung, heart, kidney, spleen and thymus.

The protein localises to the golgi apparatus membrane. It catalyses the reaction an alpha-Neu5Ac-(2-&gt;3)-beta-D-Gal-(1-&gt;3)-D-GlcNAc derivative + CMP-N-acetyl-beta-neuraminate = an alpha-Neu5Ac-(2-&gt;3)-beta-D-Gal-(1-&gt;3)-[alpha-Neu5Ac-(2-&gt;6)]-D-GlcNAc derivative + CMP + H(+). The enzyme catalyses N-acetyl-alpha-neuraminosyl-(2-&gt;3)-beta-D-galactosyl-(1-&gt;3)-N-acetyl-D-galactosamine + CMP-N-acetyl-beta-neuraminate = N-acetyl-alpha-neuraminosyl-(2-&gt;3)-beta-D-galactosyl-(1-&gt;3)-[N-acetyl-alpha-neuraminosyl-(2-&gt;6)]-N-acetyl-D-galactosamine + CMP + H(+). The catalysed reaction is a ganglioside GM1b (d18:1(4E)) + CMP-N-acetyl-beta-neuraminate = a ganglioside GD1alpha (d18:1(4E)) + CMP + H(+). It carries out the reaction 3-O-[alpha-Neu5Ac-(2-&gt;3)-beta-D-Gal-(1-&gt;3)-alpha-D-GalNAc]-L-Ser-[protein] + CMP-N-acetyl-beta-neuraminate = a 3-O-{alpha-Neu5Ac-(2-&gt;3)-beta-D-Gal-(1-&gt;3)-[alpha-Neu5Ac-(2-&gt;6)]-alpha-D-GalNAc}-L-seryl-[protein] + CMP + H(+). It catalyses the reaction 3-O-[alpha-Neu5Ac-(2-&gt;3)-beta-D-Gal-(1-&gt;3)-alpha-D-GalNAc]-L-Thr-[protein] + CMP-N-acetyl-beta-neuraminate = a 3-O-{alpha-Neu5Ac-(2-&gt;3)-beta-D-Gal-(1-&gt;3)-[alpha-Neu5Ac-(2-&gt;6)]-alpha-D-GalNAc}-L-threonyl-[protein] + CMP + H(+). It participates in protein modification; protein glycosylation. The protein operates within glycolipid biosynthesis. Its function is as follows. Transfers the sialyl group (N-acetyl-alpha-neuraminyl or NeuAc) from CMP-NeuAc to the GalNAc residue on the NeuAc-alpha-2,3-Gal-beta-1,3-GalNAc sequence of glycoproteins and glycolipids forming an alpha-2,6-linkage. Produces branched type disialyl structures by transfer of a sialyl group onto a GalNAc residue inside the backbone core chains. Prefers O-glycans to glycoproteins or glycolipids. The polypeptide is Alpha-N-acetyl-neuraminyl-2,3-beta-galactosyl-1,3-N-acetyl-galactosaminide alpha-2,6-sialyltransferase (St6galnac4) (Mus musculus (Mouse)).